The following is a 132-amino-acid chain: Small ribosomal subunit protein uS8 (132 aa).

This sequence belongs to the universal ribosomal protein uS8 family. As to quaternary structure, part of the 30S ribosomal subunit. Contacts proteins S5 and S12.

Functionally, one of the primary rRNA binding proteins, it binds directly to 16S rRNA central domain where it helps coordinate assembly of the platform of the 30S subunit. This is Small ribosomal subunit protein uS8 from Micrococcus luteus (strain ATCC 4698 / DSM 20030 / JCM 1464 / CCM 169 / CCUG 5858 / IAM 1056 / NBRC 3333 / NCIMB 9278 / NCTC 2665 / VKM Ac-2230) (Micrococcus lysodeikticus).